A 334-amino-acid polypeptide reads, in one-letter code: Holliday junction branch migration complex subunit RuvB (334 aa).

Positions 4–184 (ADRLVSAGVI…FGIVQRLEFY (181 aa)) are large ATPase domain (RuvB-L). ATP-binding positions include Ile-23, Arg-24, Gly-65, Lys-68, Thr-69, Thr-70, 131 to 133 (EDY), Arg-174, Tyr-184, and Arg-221. Thr-69 contacts Mg(2+). Residues 185–255 (RVEDLQHIVG…VASRALDMLS (71 aa)) form a small ATPAse domain (RuvB-S) region. Residues 258 to 334 (SEGFDYMDRK…YKHFGITREG (77 aa)) are head domain (RuvB-H). Residues Arg-294, Arg-313, and Arg-318 each coordinate DNA.

Belongs to the RuvB family. Homohexamer. Forms an RuvA(8)-RuvB(12)-Holliday junction (HJ) complex. HJ DNA is sandwiched between 2 RuvA tetramers; dsDNA enters through RuvA and exits via RuvB. An RuvB hexamer assembles on each DNA strand where it exits the tetramer. Each RuvB hexamer is contacted by two RuvA subunits (via domain III) on 2 adjacent RuvB subunits; this complex drives branch migration. In the full resolvosome a probable DNA-RuvA(4)-RuvB(12)-RuvC(2) complex forms which resolves the HJ.

It localises to the cytoplasm. It carries out the reaction ATP + H2O = ADP + phosphate + H(+). The RuvA-RuvB-RuvC complex processes Holliday junction (HJ) DNA during genetic recombination and DNA repair, while the RuvA-RuvB complex plays an important role in the rescue of blocked DNA replication forks via replication fork reversal (RFR). RuvA specifically binds to HJ cruciform DNA, conferring on it an open structure. The RuvB hexamer acts as an ATP-dependent pump, pulling dsDNA into and through the RuvAB complex. RuvB forms 2 homohexamers on either side of HJ DNA bound by 1 or 2 RuvA tetramers; 4 subunits per hexamer contact DNA at a time. Coordinated motions by a converter formed by DNA-disengaged RuvB subunits stimulates ATP hydrolysis and nucleotide exchange. Immobilization of the converter enables RuvB to convert the ATP-contained energy into a lever motion, pulling 2 nucleotides of DNA out of the RuvA tetramer per ATP hydrolyzed, thus driving DNA branch migration. The RuvB motors rotate together with the DNA substrate, which together with the progressing nucleotide cycle form the mechanistic basis for DNA recombination by continuous HJ branch migration. Branch migration allows RuvC to scan DNA until it finds its consensus sequence, where it cleaves and resolves cruciform DNA. The polypeptide is Holliday junction branch migration complex subunit RuvB (Erwinia tasmaniensis (strain DSM 17950 / CFBP 7177 / CIP 109463 / NCPPB 4357 / Et1/99)).